Here is an 82-residue protein sequence, read N- to C-terminus: uncharacterized protein (82 aa).

The N-terminal stretch at Met-1–Ala-19 is a signal peptide.

This is an uncharacterized protein from Rickettsia prowazekii (strain Madrid E).